The sequence spans 157 residues: Transcription elongation factor GreB (157 aa).

Positions 52–73 form a coiled coil; sequence KKLLREIDRRVRYLRKRLEDMR.

It belongs to the GreA/GreB family. GreB subfamily.

Necessary for efficient RNA polymerase transcription elongation past template-encoded arresting sites. The arresting sites in DNA have the property of trapping a certain fraction of elongating RNA polymerases that pass through, resulting in locked ternary complexes. Cleavage of the nascent transcript by cleavage factors such as GreA or GreB allows the resumption of elongation from the new 3'terminus. GreB releases sequences of up to 9 nucleotides in length. This chain is Transcription elongation factor GreB, found in Pseudomonas syringae pv. tomato (strain ATCC BAA-871 / DC3000).